Here is a 241-residue protein sequence, read N- to C-terminus: Probable porphobilinogen deaminase (241 aa).

Belongs to the HMBS family.

The catalysed reaction is 4 porphobilinogen + H2O = hydroxymethylbilane + 4 NH4(+). Its pathway is porphyrin-containing compound metabolism; protoporphyrin-IX biosynthesis; coproporphyrinogen-III from 5-aminolevulinate: step 2/4. In terms of biological role, tetrapolymerization of the monopyrrole PBG into the hydroxymethylbilane pre-uroporphyrinogen in several discrete steps. This chain is Probable porphobilinogen deaminase (hemC), found in Chlamydia trachomatis serovar D (strain ATCC VR-885 / DSM 19411 / UW-3/Cx).